We begin with the raw amino-acid sequence, 92 residues long: MEIKILKSESNYLELEIEGEDHTLGNLIAGTLRKISGVSFASYYQPHPLTDKIIVKILTDGSIAPKDALLKAIETVRVMASHYIDEIKGLTK.

It belongs to the archaeal Rpo11/eukaryotic RPB11/RPC19 RNA polymerase subunit family. As to quaternary structure, part of the 13-subunit RNA polymerase complex.

It is found in the cytoplasm. It catalyses the reaction RNA(n) + a ribonucleoside 5'-triphosphate = RNA(n+1) + diphosphate. Its function is as follows. DNA-dependent RNA polymerase (RNAP) catalyzes the transcription of DNA into RNA using the four ribonucleoside triphosphates as substrates. This is DNA-directed RNA polymerase subunit Rpo11 from Saccharolobus shibatae (strain ATCC 51178 / DSM 5389 / JCM 8931 / NBRC 15437 / B12) (Sulfolobus shibatae).